Consider the following 578-residue polypeptide: Palmitoyltransferase ZDHHC1 (578 aa).

The Cytoplasmic segment spans residues 1-41 (MDVCSKNSNRTAPVSEGGIRRADVPLCSRTNGWSWPPHPFQ). Residues 42–62 (FLAWLLYLYFAVTGFGVFVPL) traverse the membrane as a helical segment. At 63 to 71 (LPTHWIPAG) the chain is on the lumenal side. The helical transmembrane segment at 72 to 92 (YICTGITFVCHLFMHLMAVSI) threads the bilayer. Topologically, residues 93–174 (DPADYNVRAK…YWLFLNSVIS (82 aa)) are cytoplasmic. Residues 121–173 (ENCHCYLCEVDVGPKSKHCSACNKCVASFDHHCRWLNNCVGSRNYWLFLNSVI) form the DHHC domain. Catalysis depends on C153, which acts as the S-palmitoyl cysteine intermediate. Residues 175–195 (ALLGIVLVVVIASYVFIEFFL) form a helical membrane-spanning segment. At 196 to 230 (DPSKLRSDKHFQQVRNESVVWFVFLPVAPVTTAGP) the chain is on the lumenal side. The helical transmembrane segment at 231 to 251 (AIPALAGVTIALGLLSALLLG) threads the bilayer. The Cytoplasmic portion of the chain corresponds to 252–578 (HLLCFHIYLM…PSSRVGTSLA (327 aa)). A compositionally biased stretch (basic and acidic residues) spans 278-288 (QEAGDSRKPPP). Disordered regions lie at residues 278–298 (QEAG…PKLN), 345–376 (HMDE…KRKV), 497–517 (SAAG…TAAR), and 532–578 (SMFM…TSLA). The segment covering 363–376 (PHPHKHAQKKKRKV) has biased composition (basic residues). The span at 552 to 561 (AAKRKQTGKK) shows a compositional bias: basic residues.

The protein belongs to the DHHC palmitoyltransferase family.

The protein resides in the endosome membrane. Its subcellular location is the endoplasmic reticulum membrane. The protein localises to the golgi apparatus. It catalyses the reaction L-cysteinyl-[protein] + hexadecanoyl-CoA = S-hexadecanoyl-L-cysteinyl-[protein] + CoA. In terms of biological role, palmitoyltransferase that catalyzes the addition of palmitate onto various protein substrates, such as ncdn and nlrp3. This Danio rerio (Zebrafish) protein is Palmitoyltransferase ZDHHC1.